Here is a 313-residue protein sequence, read N- to C-terminus: Dimethyladenosine transferase (313 aa).

Positions 1–22 (MPKIKSAASGRRRERQQQRGQL) are disordered. Residues His-37, Leu-39, Gly-64, Glu-85, Asp-113, and Asn-128 each contribute to the S-adenosyl-L-methionine site.

It belongs to the class I-like SAM-binding methyltransferase superfamily. rRNA adenine N(6)-methyltransferase family. Part of the small subunit (SSU) processome, composed of more than 70 proteins and the RNA chaperone small nucleolar RNA (snoRNA) U3.

The protein localises to the nucleus. It is found in the nucleoplasm. It localises to the nucleolus. It carries out the reaction adenosine(1779)/adenosine(1780) in 18S rRNA + 4 S-adenosyl-L-methionine = N(6)-dimethyladenosine(1779)/N(6)-dimethyladenosine(1780) in 18S rRNA + 4 S-adenosyl-L-homocysteine + 4 H(+). Its function is as follows. Specifically dimethylates two adjacent adenosines in the loop of a conserved hairpin near the 3'-end of 18S rRNA in the 40S particle. Involved in the pre-rRNA processing steps leading to small-subunit rRNA production independently of its RNA-modifying catalytic activity. Part of the small subunit (SSU) processome, first precursor of the small eukaryotic ribosomal subunit. During the assembly of the SSU processome in the nucleolus, many ribosome biogenesis factors, an RNA chaperone and ribosomal proteins associate with the nascent pre-rRNA and work in concert to generate RNA folding, modifications, rearrangements and cleavage as well as targeted degradation of pre-ribosomal RNA by the RNA exosome. The chain is Dimethyladenosine transferase (DIMT1) from Bos taurus (Bovine).